Here is a 136-residue protein sequence, read N- to C-terminus: Small ribosomal subunit protein uS9 (136 aa).

The segment at Ser97–Arg136 is disordered. The span at Pro98–Ala116 shows a compositional bias: basic and acidic residues. Positions Lys117–Arg136 are enriched in basic residues.

The protein belongs to the universal ribosomal protein uS9 family.

This chain is Small ribosomal subunit protein uS9, found in Prochlorococcus marinus (strain MIT 9215).